A 170-amino-acid polypeptide reads, in one-letter code: Large ribosomal subunit protein uL10 (170 aa).

The protein belongs to the universal ribosomal protein uL10 family. As to quaternary structure, part of the ribosomal stalk of the 50S ribosomal subunit. The N-terminus interacts with L11 and the large rRNA to form the base of the stalk. The C-terminus forms an elongated spine to which L12 dimers bind in a sequential fashion forming a multimeric L10(L12)X complex.

Its function is as follows. Forms part of the ribosomal stalk, playing a central role in the interaction of the ribosome with GTP-bound translation factors. This Lactobacillus helveticus (strain DPC 4571) protein is Large ribosomal subunit protein uL10.